The following is a 403-amino-acid chain: Presqualene diphosphate synthase (403 aa).

Mg(2+) contacts are provided by aspartate 84, glutamate 87, and aspartate 88.

Belongs to the phytoene/squalene synthase family. Requires Mg(2+) as cofactor.

It carries out the reaction 2 (2E,6E)-farnesyl diphosphate = presqualene diphosphate + diphosphate. In terms of biological role, catalyzes the biosynthesis of presqualene diphosphate (PSPP). Works in combination with SSL-2 or SSL-3 to produce respectively squalene or botryococcene. In most other species, farnesyl diphosphate (FPP) is converted into squalene in a two-step reaction by a single enzyme. This chain is Presqualene diphosphate synthase (SSL-1), found in Botryococcus braunii (Green alga).